The following is a 100-amino-acid chain: Small ribosomal subunit protein uS14 (100 aa).

Belongs to the universal ribosomal protein uS14 family. Part of the 30S ribosomal subunit. Contacts proteins S3 and S10.

Functionally, binds 16S rRNA, required for the assembly of 30S particles and may also be responsible for determining the conformation of the 16S rRNA at the A site. This chain is Small ribosomal subunit protein uS14, found in Synechocystis sp. (strain ATCC 27184 / PCC 6803 / Kazusa).